Consider the following 231-residue polypeptide: CLAVATA3/ESR (CLE)-related protein 4B-1 (231 aa).

A signal peptide spans 1–21; sequence MATNTMLCLLILSVVLALAFA. Positions 21 to 83 are required for secretion from the host cytoplasm to the host apoplasm; it reads ATNKKGDEEP…SNLLPNNNWM (63 aa). Asn-32 carries an N-linked (GlcNAc...) asparagine glycan. The disordered stretch occupies residues 116–231; that stretch reads RKTGMHSQRH…APAGPDPIHH (116 aa). Composition is skewed to basic and acidic residues over residues 125–137 and 144–221; these read HHEETTLEQEKRV and PIHH…EKRG. Residues 127 to 135 form an A-1 repeat; it reads EETTLEQEK. The 5 X approximate repeat A stretch occupies residues 127–219; that stretch reads EETTLEQEKR…HEETTFEQEK (93 aa). The stretch at 136–147 is one CLE-1 repeat; that stretch reads RVAGAGPDPIHH. Residues 136 to 231 form a 5 X approximate repeat CLE region; it reads RVAGAGPDPI…APAGPDPIHH (96 aa). Residues 148–156 form an A-2 repeat; it reads QDTTLEQEK. Residues 157 to 168 form a CLE-2 repeat; it reads RAVPAGPDPKHH. One copy of the A-3 repeat lies at 169 to 177; it reads EETTLEQEK. A CLE-3 repeat occupies 178–189; it reads RAVPAGPDPKHH. One copy of the A-4 repeat lies at 190–198; it reads EETTLEQEK. The CLE-4 repeat unit spans residues 199-210; the sequence is RAVPAGPDPKHH. Residues 211–219 form an A-5 repeat; that stretch reads EETTFEQEK. A CLE-5 repeat occupies 220 to 231; sequence RGAPAGPDPIHH.

Belongs to the CLV3/ESR signal peptide family. In terms of tissue distribution, highly expressed exclusively within the dorsal esophageal gland cell during syncytium formation in host plants.

It localises to the secreted. The protein localises to the host cytoplasm. It is found in the host extracellular space. The protein resides in the extracellular space. Its subcellular location is the apoplast. In terms of biological role, mimics host plant CLE extracellular signal peptides that regulate cell fate. May play a role in the differentiation or division of feeding cells (syncytia) induced in plant roots during infection. In Globodera rostochiensis (Golden nematode worm), this protein is CLAVATA3/ESR (CLE)-related protein 4B-1 (CLE-4B-1).